The following is a 470-amino-acid chain: Cyclin-dependent kinase E-1 (470 aa).

In terms of domain architecture, Protein kinase spans 25-333; sequence YNLVGKIGEG…ASQALEHEYF (309 aa). ATP contacts are provided by residues 31–39 and K55; that span reads IGEGTYGLV. Y36 carries the post-translational modification Phosphotyrosine. The Proton acceptor role is filled by D154. Residues 428-470 form a disordered region; the sequence is LNPSVPLQQQRGMAQPHQQQQLRRKDPGMGMSGYAPPNKSRRL. The segment covering 432-448 has biased composition (polar residues); sequence VPLQQQRGMAQPHQQQQ.

The protein belongs to the protein kinase superfamily. CMGC Ser/Thr protein kinase family. CDC2/CDKX subfamily. Interacts with MED14, HDA19 and LUG. Interacts with KIN10. In terms of tissue distribution, expressed in roots, leaves and stems. Expressed in young dividing tissue, such as shoot and root tips, lateral root primordia, young leaves and flowers. Expressed in the inflorescence meristem, inflorescence stem and young flowers.

Its subcellular location is the nucleus. The catalysed reaction is L-seryl-[protein] + ATP = O-phospho-L-seryl-[protein] + ADP + H(+). It catalyses the reaction L-threonyl-[protein] + ATP = O-phospho-L-threonyl-[protein] + ADP + H(+). It carries out the reaction [DNA-directed RNA polymerase] + ATP = phospho-[DNA-directed RNA polymerase] + ADP + H(+). In terms of biological role, involved in cell differentiation. Required for the specification of stamen and carpel identities and for the proper termination of stem cells in the floral meristem. In Arabidopsis thaliana (Mouse-ear cress), this protein is Cyclin-dependent kinase E-1 (CDKE-1).